The following is a 72-amino-acid chain: MLINAVIEKDENGYFAFVPFLKGCVSQGKSYEEALRNIKEAIELYLGDLEADELAFLSKKNSVIAPIEIAFA.

The protein belongs to the UPF0150 family.

The sequence is that of UPF0150 protein jhp_0960 from Helicobacter pylori (strain J99 / ATCC 700824) (Campylobacter pylori J99).